Here is a 546-residue protein sequence, read N- to C-terminus: Type II methyltransferase M.XhoI (546 aa).

Belongs to the N(4)/N(6)-methyltransferase family.

It catalyses the reaction a 2'-deoxyadenosine in DNA + S-adenosyl-L-methionine = an N(6)-methyl-2'-deoxyadenosine in DNA + S-adenosyl-L-homocysteine + H(+). In terms of biological role, a gamma subtype methylase, recognizes the double-stranded sequence 5'-CTCGAG-3', methylates A-5 on both strands, and protects the DNA from cleavage by the XhoI endonuclease. This Xanthomonas vasicola protein is Type II methyltransferase M.XhoI.